The sequence spans 480 residues: MKVLSVSSEVFPLIKTGGLADVSGALPIALKAFGVETKTLLPGYPAVMKVIRDPVVRLEFPDLLGEPAAVLEVQHEGLDLLILDAPAYYDRPGGPYVDPLGKDYPDNWRRFAALSLAASEIAAGLLPGWRPDLVHTHDWQAALTSVYMRYYPTPELPSVLTIHNIAFQGQFGPEIFPGLRLPAHAFATDSIEYYGTVGYLKGGLQTAHAITTVSPTYADEILTPEFGMGLEGVIASHIDNLHGIVNGIDTDIWNPATDPVVHTHYGPTTLKNREENRRSIAEFFHLDNDDAPIFCVISRLTWQKGMDIVANIADEIVAMGGKLVVLGSGEAALEGALLASASRHPGRIGVSIGYNEPMSHLMQAGCDAIIIPSRFEPCGLTQLYGLRYGCVPIVARTGGLNDTVIDANHAALAAKVATGIQFSPVTETGMLQAIRRAMHFYADRKLWTQLQKQGMKSDVSWEKSAERYAALYSSLVSKGM.

ADP-alpha-D-glucose is bound at residue lysine 15.

Belongs to the glycosyltransferase 1 family. Bacterial/plant glycogen synthase subfamily.

It catalyses the reaction [(1-&gt;4)-alpha-D-glucosyl](n) + ADP-alpha-D-glucose = [(1-&gt;4)-alpha-D-glucosyl](n+1) + ADP + H(+). It functions in the pathway glycan biosynthesis; glycogen biosynthesis. Synthesizes alpha-1,4-glucan chains using ADP-glucose. In Rhizobium leguminosarum bv. trifolii (strain WSM2304), this protein is Glycogen synthase.